The following is a 265-amino-acid chain: 3-methyl-2-oxobutanoate hydroxymethyltransferase (265 aa).

The Mg(2+) site is built by D44 and D83. 3-methyl-2-oxobutanoate contacts are provided by residues 44 to 45 (DS), D83, and K113. Residue E115 coordinates Mg(2+). E183 (proton acceptor) is an active-site residue.

The protein belongs to the PanB family. As to quaternary structure, homodecamer; pentamer of dimers. The cofactor is Mg(2+).

It localises to the cytoplasm. It catalyses the reaction 3-methyl-2-oxobutanoate + (6R)-5,10-methylene-5,6,7,8-tetrahydrofolate + H2O = 2-dehydropantoate + (6S)-5,6,7,8-tetrahydrofolate. It participates in cofactor biosynthesis; (R)-pantothenate biosynthesis; (R)-pantoate from 3-methyl-2-oxobutanoate: step 1/2. Catalyzes the reversible reaction in which hydroxymethyl group from 5,10-methylenetetrahydrofolate is transferred onto alpha-ketoisovalerate to form ketopantoate. In Leptospira borgpetersenii serovar Hardjo-bovis (strain JB197), this protein is 3-methyl-2-oxobutanoate hydroxymethyltransferase.